The chain runs to 480 residues: Argininosuccinate lyase (480 aa).

The interval 1–20 (MTQQDGGQAGQAEPTKLWGG) is disordered.

It belongs to the lyase 1 family. Argininosuccinate lyase subfamily.

The protein localises to the cytoplasm. It carries out the reaction 2-(N(omega)-L-arginino)succinate = fumarate + L-arginine. It participates in amino-acid biosynthesis; L-arginine biosynthesis; L-arginine from L-ornithine and carbamoyl phosphate: step 3/3. The protein is Argininosuccinate lyase of Saccharopolyspora erythraea (strain ATCC 11635 / DSM 40517 / JCM 4748 / NBRC 13426 / NCIMB 8594 / NRRL 2338).